Here is a 242-residue protein sequence, read N- to C-terminus: Tryptophan synthase alpha chain (242 aa).

Active-site proton acceptor residues include Glu31 and Asp42.

It belongs to the TrpA family. Tetramer of two alpha and two beta chains.

It catalyses the reaction (1S,2R)-1-C-(indol-3-yl)glycerol 3-phosphate + L-serine = D-glyceraldehyde 3-phosphate + L-tryptophan + H2O. The protein operates within amino-acid biosynthesis; L-tryptophan biosynthesis; L-tryptophan from chorismate: step 5/5. Its function is as follows. The alpha subunit is responsible for the aldol cleavage of indoleglycerol phosphate to indole and glyceraldehyde 3-phosphate. This Staphylococcus aureus (strain bovine RF122 / ET3-1) protein is Tryptophan synthase alpha chain.